The primary structure comprises 488 residues: MTDSPGGVAPASPVEDASDASLGQPEEGAPCQVVLQGAELNGILQAFAPLRTSLLDSLLVMGDRGILIHNTIFGEQVFLPLEHSQFSRYRWRGPTAAFLSLVDQKRSLLSVFRANQYPDLRRVELAITGQAPFRTLVQRIWTTTSDGEAVELASETLMKRELTSFVVLVPQGTPDVQLRLTRPQLTKVLNATGADSATPTTFELGVNGKFSVFTTSTCVTFAAREEGVSSSTSTQVQILSNALTKAGQAAANAKTVYGENTHRTFSVVVDDCSMRAVLRRLQVGGGTLKFFLTTPVPSLCVTATGPNAVSAVFLLKPQKICLDWLGHSQGSPSAGSSASRASGSEPTDSQDSASDAVSHGDPEDLDGAARAGEAGALHACPMPSSTTRVTPTTKRGRSGGEDARADTALKKPKTGSPTAPPPADPVPLDTEDDSDAADGTAARPAAPDARSGSRYACYFRDLPTGEASPGAFSAFRGGPQTPYGFGFP.

3 disordered regions span residues 1 to 26 (MTDS…GQPE), 331 to 453 (SPSA…RSGS), and 469 to 488 (PGAF…FGFP). Positions 331-344 (SPSAGSSASRASGS) are enriched in low complexity. A compositionally biased stretch (polar residues) spans 345-355 (EPTDSQDSASD). The segment covering 368–379 (AARAGEAGALHA) has biased composition (low complexity). The span at 383–393 (PSSTTRVTPTT) shows a compositional bias: polar residues. A Bipartite nuclear localization signal motif is present at residues 394 to 413 (KRGRSGGEDARADTALKKPK). Residues 398 to 409 (SGGEDARADTAL) are compositionally biased toward basic and acidic residues. Positions 437–453 (ADGTAARPAAPDARSGS) are enriched in low complexity.

Belongs to the herpesviridae DNA polymerase processivity factor family. As to quaternary structure, interacts with the DNA polymerase catalytic subunit UL30. Interacts with the origin-binding protein.

The protein resides in the host nucleus. Its function is as follows. Plays an essential role in viral DNA replication by acting as the polymerase accessory subunit. Associates with the viral polymerase to increase its processivity and forms high-affinity direct interactions with DNA. Facilitates the origin-binding protein UL9 loading onto DNA thus increasing its ability to assemble into a functional complex capable of unwinding duplex DNA. The chain is DNA polymerase processivity factor from Homo sapiens (Human).